Here is a 144-residue protein sequence, read N- to C-terminus: Deoxyuridine 5'-triphosphate nucleotidohydrolase (144 aa).

Positions 66, 79, 82, 85, 90, 134, 139, and 140 each coordinate dUMP.

It belongs to the dUTPase family. Homotrimer. The cofactor is Mg(2+).

It carries out the reaction dUTP + H2O = dUMP + diphosphate + H(+). Its pathway is pyrimidine metabolism; dUMP biosynthesis; dUMP from dCTP (dUTP route): step 2/2. Functionally, involved in nucleotide metabolism via production of dUMP, the immediate precursor of thymidine nucleotides, and decreases the intracellular concentration of dUTP so that uracil cannot be incorporated into DNA. This Candida glabrata (strain ATCC 2001 / BCRC 20586 / JCM 3761 / NBRC 0622 / NRRL Y-65 / CBS 138) (Yeast) protein is Deoxyuridine 5'-triphosphate nucleotidohydrolase (DUT1).